Consider the following 145-residue polypeptide: Basic phospholipase A2 cPm08 (145 aa).

The first 21 residues, 1–21 (MYPAHLLVLLAVCVSLLGASA), serve as a signal peptide directing secretion. The propeptide occupies 22 to 27 (IPPLPL). Intrachain disulfides connect C38–C98, C54–C144, C56–C72, C71–C125, C78–C118, C87–C111, and C105–C116. Positions 55, 57, and 59 each coordinate Ca(2+). H75 is an active-site residue. D76 contacts Ca(2+). D119 is an active-site residue.

It belongs to the phospholipase A2 family. Group I subfamily. D49 sub-subfamily. Requires Ca(2+) as cofactor. As to expression, expressed by the venom gland.

The protein localises to the secreted. It carries out the reaction a 1,2-diacyl-sn-glycero-3-phosphocholine + H2O = a 1-acyl-sn-glycero-3-phosphocholine + a fatty acid + H(+). PLA2 catalyzes the calcium-dependent hydrolysis of the 2-acyl groups in 3-sn-phosphoglycerides. The chain is Basic phospholipase A2 cPm08 from Laticauda semifasciata (Black-banded sea krait).